The following is a 63-amino-acid chain: MKILYLLSAFLFLAFLSESGNAQPQCRWLDGFCHSSPCPSGTTSIGQQDCLWYESCCIPRYEK.

The first 22 residues, 1–22 (MKILYLLSAFLFLAFLSESGNA), serve as a signal peptide directing secretion. 3 disulfide bridges follow: Cys26–Cys56, Cys33–Cys50, and Cys38–Cys57.

In terms of tissue distribution, highly expressed in pancreas, heart, liver, brain and kidney. Expressed to a low extent in the venom gland.

The protein localises to the secreted. This chain is Crotasin, found in Crotalus durissus terrificus (South American rattlesnake).